A 519-amino-acid chain; its full sequence is Chaperone SurA (519 aa).

A signal peptide spans 1-31; that stretch reads MMRSLHSLRRMSGTVLALMLAAGLPLSAAQA. Composition is skewed to low complexity over residues 31-45 and 197-207; these read AQPAKPAPKGDQKPA and PAAAQATRAPA. 2 disordered regions span residues 31-50 and 196-221; these read AQPAKPAPKGDQKPATPAPS and NPAAAQATRAPAPQQPQPQPRQPAQS. Residues 223-324 form the PpiC 1 domain; that stretch reads PAMLVLAQIL…NGFHILKVVD (102 aa). A disordered region spans residues 328 to 361; it reads GGQPAQAARPAPAPAPQQPSSFQEGPSVAAPQGP. The region spanning 364 to 463 is the PpiC 2 domain; sequence VTQTHARHIL…FGWHLIQVLE (100 aa).

It localises to the periplasm. It carries out the reaction [protein]-peptidylproline (omega=180) = [protein]-peptidylproline (omega=0). Functionally, chaperone involved in the correct folding and assembly of outer membrane proteins. Recognizes specific patterns of aromatic residues and the orientation of their side chains, which are found more frequently in integral outer membrane proteins. May act in both early periplasmic and late outer membrane-associated steps of protein maturation. The chain is Chaperone SurA from Bordetella parapertussis (strain 12822 / ATCC BAA-587 / NCTC 13253).